Reading from the N-terminus, the 1031-residue chain is Protein draper (1031 aa).

Positions 1–16 (MLPVILIACLAQLVLA) are cleaved as a signal peptide. The Extracellular segment spans residues 17-800 (QADLKDLDGP…DQSENSSRAS (784 aa)). Positions 25–100 (GPNICKRREL…YIASAGECVP (76 aa)) constitute an EMI domain. 6 disulfide bridges follow: Cys-29-Cys-88, Cys-55-Cys-62, Cys-87-Cys-98, Cys-102-Cys-111, Cys-106-Cys-117, and Cys-119-Cys-128. Asn-73 is a glycosylation site (N-linked (GlcNAc...) asparagine). EGF-like domains follow at residues 99-129 (VPHC…PACD), 137-172 (YGRN…ARCA), 180-215 (FGAN…PLCD), 223-258 (HGAQ…DVCA), 266-301 (YGPG…ERCF), and 309-344 (YGFN…AKCA). Asn-140 carries N-linked (GlcNAc...) asparagine glycosylation. 3 disulfide bridges follow: Cys-141-Cys-153, Cys-147-Cys-160, and Cys-162-Cys-171. N-linked (GlcNAc...) asparagine glycosylation is present at Asn-183. Cystine bridges form between Cys-184-Cys-196, Cys-190-Cys-203, Cys-205-Cys-214, Cys-227-Cys-239, Cys-233-Cys-246, Cys-248-Cys-257, Cys-270-Cys-282, Cys-276-Cys-289, and Cys-291-Cys-300. A glycan (N-linked (GlcNAc...) asparagine) is linked at Asn-312. Intrachain disulfides connect Cys-313/Cys-325, Cys-319/Cys-332, and Cys-334/Cys-343. Residue Asn-329 is glycosylated (N-linked (GlcNAc...) asparagine). Asn-358 carries N-linked (GlcNAc...) asparagine glycosylation. EGF-like domains are found at residues 398-433 (YGPN…PTCE) and 484-519 (FGQD…ERCE). Cystine bridges form between Cys-402–Cys-414, Cys-408–Cys-421, Cys-423–Cys-432, Cys-488–Cys-500, Cys-494–Cys-507, and Cys-509–Cys-518. Asn-418 carries an N-linked (GlcNAc...) asparagine glycan. A glycan (N-linked (GlcNAc...) asparagine) is linked at Asn-504. N-linked (GlcNAc...) asparagine glycans are attached at residues Asn-540, Asn-584, and Asn-585. The EGF-like 9 domain occupies 572–607 (YGENCDKVCRCLNNSSCDPDSGNCICSAGWTGADCA). Disulfide bonds link Cys-576-Cys-588, Cys-582-Cys-595, and Cys-597-Cys-606. Asn-630 carries an N-linked (GlcNAc...) asparagine glycan. Positions 660–695 (YGPGCKLKCNCEHGGECNHVTGQCQCLPGWTGSNCN) constitute an EGF-like 10 domain. 3 disulfides stabilise this stretch: Cys-664–Cys-676, Cys-670–Cys-683, and Cys-685–Cys-694. N-linked (GlcNAc...) asparagine glycosylation is found at Asn-695 and Asn-795. Residues 801-821 (VALTLVLMTLFACIIFAVFIY) traverse the membrane as a helical segment. The Cytoplasmic segment spans residues 822 to 1031 (YRRRVSNLKT…SPSSSPKFLK (210 aa)). A compositionally biased stretch (basic and acidic residues) spans 940–954 (KEGYKDPDEYDHLDY). Disordered regions lie at residues 940–964 (KEGY…QKPH) and 989–1031 (TVLL…KFLK). Polar residues predominate over residues 1009–1031 (DNTNTNLDNVSTASPSSSPKFLK).

Belongs to the MEGF family. As to quaternary structure, interacts (via the cytoplasmic domain) with shark; this is required for the recruitment of drpr and glial cells to severed axons and for the phagocytosis of axonal debris by glial cells following axon injury. Interacts with ced-6. Interacts with csw; this results in dephosphorylation of drpr isoform A which is required for the inhibition of glial cell engulfment of axonal debris produced following axonal injury. In terms of processing, phosphorylated on tyrosine residues. Phosphorylation is induced by binding to prtp. It is also induced by binding to the membrane phospholipid phosphatidylserine. Phosphorylation may be mediated directly or indirectly by Src42a and is required for interaction with shark. Post-translationally, dephosphorylated by csw which is required for the inhibition of glial cell engulfment of axonal debris produced following axonal injury. As to expression, expressed in adult head (at protein level). Expressed in glia, macrophages and ectoderm (at protein level). Detected in glia around the mushroom body dorsal lobe and in glial processes infiltrating the medial lobe (at protein level). Expressed in adult brain glia including antennal lobe glia (at protein level). Expressed in the larval fat body (at protein level). Expressed in the ovary (at protein level). Isoform B: Predominant isoform in adult glia.

The protein localises to the cell membrane. Its subcellular location is the cell projection. It localises to the axon. It is found in the cytoplasm. The protein resides in the postsynaptic cell membrane. The protein localises to the cell cortex. Its subcellular location is the phagocytic cup. It localises to the cytoplasmic vesicle. It is found in the phagosome. Receptor which is involved in the phagocytosis of a variety of cells including apoptotic cells, severed and pruned axons, degenerating dendrites, salivary gland cells, germline cells and bacteria. Binds to the ligand prtp which relocates from the endoplasmic reticulum to the cell surface during apoptosis. Ligand-binding may promote tyrosine phosphorylation mediated by Src42a, interaction with shark and subsequent activation of phagocytosis. Also binds to the membrane phospholipid phosphatidylserine which is exposed on the surface of apoptotic cells. Required for the phagocytosis of apoptotic cells by macrophages. Also required for the phagocytosis of apoptotic neurons by glial cells in the embryonic nervous system. Acts downstream of NimC4/simu in the glial phagocytosis of apoptotic neurons. Plays a role in the glial engulfment of larval axons as part of programmed axon pruning during metamorphosis. Also mediates glial cell clearance of severed axons following axonal injury. Required for the engulfment of degenerating dendrites by epidermal cells. Required in the ovary for the engulfment and subsequent processing of dying germline cells by follicular epithelial cells through activation of the JNK/bsk pathway. Plays a role in neuromuscular junction development by mediating the clearance of presynaptic debris and immature boutons which are shed by growing synapses. Required for larval salivary gland cell death which occurs following a rise in steroid levels after puparium formation. Also involved in bacterial phagocytosis. Required for hemocyte phagocytosis of the Gram-positive bacterium S.aureus. Lipoteichoic acid, synthesized by the S.aureus lipoteichoic acid synthase ltaS, acts as a ligand for drpr in this process. Together with Src42a and shark, promotes the migration of macrophages to sites of wounding as part of a signaling cascade where Scr42a detects production of hydrogen peroxide at wound sites which triggers phosphorylation of drpr and subsequent recruitment and activation of shark. Also required for macrophage priming which occurs following phagocytosis of apoptotic cells and ensures that macrophages develop a form of molecular memory that allows them to later mount an inflammatory response to tissue damage and bacterial infection. Is also an essential factor in the regulation of muscle development and myogenesis, and as a consequence is required for normal locomotion. Likely to control the balance between skeletal muscle satellite cells proliferation and differentiation through regulation of the notch signaling pathway. Its function is as follows. Promotes engulfment of axonal debris by glial cells following axonal injury. Functionally, potently inhibits glial cell engulfment of axonal debris produced following axonal injury. In Drosophila melanogaster (Fruit fly), this protein is Protein draper.